Reading from the N-terminus, the 62-residue chain is Small acidic protein 1 (62 aa).

In terms of assembly, interacts with the COP9 signalosome. Expressed in roots, flowers, siliques, stems, leaves and seeds. In flowers, detected in petals, anthers and pistils.

Its function is as follows. Mediates responses to the synthetic auxin 2,4-dichlorophenoxyacetic acid (2,4-D). Not involved in the response to indole-3-acetic acid (IAA). Interacts with RUB modification-related components and may regulate the cullin-ring ubiquitin E3 ligase complex (CRL) activity. This chain is Small acidic protein 1 (SMAP1), found in Arabidopsis thaliana (Mouse-ear cress).